The following is a 233-amino-acid chain: Putative peroxiredoxin (233 aa).

Residues 41–200 form the Thioredoxin domain; sequence AQIGKEAPEF…TIRIVKAIQF (160 aa). Cys87 functions as the Cysteine sulfenic acid (-SOH) intermediate in the catalytic mechanism.

The protein belongs to the peroxiredoxin family. AhpC/Prx1 subfamily. In terms of assembly, homodimer; disulfide-linked, upon oxidation.

It is found in the cell membrane. It catalyses the reaction a hydroperoxide + [thioredoxin]-dithiol = an alcohol + [thioredoxin]-disulfide + H2O. Functionally, thiol-specific peroxidase that catalyzes the reduction of hydrogen peroxide and organic hydroperoxides to water and alcohols, respectively. Plays a role in cell protection against oxidative stress by detoxifying peroxides and as sensor of hydrogen peroxide-mediated signaling events. The chain is Putative peroxiredoxin from Entamoeba histolytica (strain ATCC 30459 / HM-1:IMSS / ABRM).